The primary structure comprises 365 residues: Peridinin-chlorophyll a-binding protein, chloroplastic (365 aa).

The transit peptide at 1–52 (MVRGARKAIAVGVAVAVACGLQKHLNFVPGPRHAAPVAAAAASMMMAPAAFA) directs the protein to the chloroplast. 2 repeat units span residues 53–215 (DEIG…VPSG) and 216–365 (DKIG…ASQR).

In terms of assembly, monomer.

The protein localises to the plastid. Its subcellular location is the chloroplast. Its function is as follows. Water-soluble antenna for capture of solar energy in the blue-green range. Peridinin is an asymmetric carotenoid. The polypeptide is Peridinin-chlorophyll a-binding protein, chloroplastic (Symbiodinium sp. (Dinoflagellate)).